Reading from the N-terminus, the 556-residue chain is Olefin beta-lactone synthetase (556 aa).

ATP contacts are provided by residues 187-195 (TSGSTGVPK), 321-326 (TPYGAT), Asp430, and Arg445.

Belongs to the ATP-dependent AMP-binding enzyme family. In terms of assembly, monomer. Forms a complex with OleB and OleD.

The protein resides in the cytoplasm. The catalysed reaction is a (2R,3S)-2-alkyl-3-hydroxyalkanoate + ATP = a cis-3-alkyl-4-alkyloxetan-2-one + AMP + diphosphate. Its function is as follows. Involved in olefin biosynthesis. Catalyzes the conversion of 2-alkyl-3-hydroxyalkanoic acids to beta-lactones in the presence of ATP. In Xanthomonas campestris pv. campestris (strain ATCC 33913 / DSM 3586 / NCPPB 528 / LMG 568 / P 25), this protein is Olefin beta-lactone synthetase.